The primary structure comprises 88 residues: MLGAECPKPCKGKWPTPPFDPRFPNQNQTRNCYQNFLDYHRCIKTMNRRGKSTQPCEYYFRVYHSLCPISWVQRWKEQIKDGTFAGKI.

The region spanning 29–75 is the CHCH domain; the sequence is TRNCYQNFLDYHRCIKTMNRRGKSTQPCEYYFRVYHSLCPISWVQRW. The Cx9C motif signature appears at 32-42; the sequence is CYQNFLDYHRC. 2 disulfide bridges follow: C32–C67 and C42–C56. Positions 56 to 67 match the Cx10C motif motif; sequence CEYYFRVYHSLC.

The protein belongs to the cytochrome c oxidase subunit 6B family. Component of the cytochrome c oxidase (complex IV, CIV), a multisubunit enzyme composed of 14 subunits. The complex is composed of a catalytic core of 3 subunits MT-CO1, MT-CO2 and MT-CO3, encoded in the mitochondrial DNA, and 11 supernumerary subunits COX4I1 (or COX4I2), COX5A, COX5B, COX6A2 (or COX6A1), COX6B1 (or COX6B2), COX6C, COX7A1 (or COX7A2), COX7B, COX7C, COX8B and NDUFA4, which are encoded in the nuclear genome. The complex exists as a monomer or a dimer and forms supercomplexes (SCs) in the inner mitochondrial membrane with NADH-ubiquinone oxidoreductase (complex I, CI) and ubiquinol-cytochrome c oxidoreductase (cytochrome b-c1 complex, complex III, CIII), resulting in different assemblies (supercomplex SCI(1)III(2)IV(1) and megacomplex MCI(2)III(2)IV(2)). As to expression, testis specific.

It is found in the mitochondrion inner membrane. Its pathway is energy metabolism; oxidative phosphorylation. Its function is as follows. Component of the cytochrome c oxidase, the last enzyme in the mitochondrial electron transport chain which drives oxidative phosphorylation. The respiratory chain contains 3 multisubunit complexes succinate dehydrogenase (complex II, CII), ubiquinol-cytochrome c oxidoreductase (cytochrome b-c1 complex, complex III, CIII) and cytochrome c oxidase (complex IV, CIV), that cooperate to transfer electrons derived from NADH and succinate to molecular oxygen, creating an electrochemical gradient over the inner membrane that drives transmembrane transport and the ATP synthase. Cytochrome c oxidase is the component of the respiratory chain that catalyzes the reduction of oxygen to water. Electrons originating from reduced cytochrome c in the intermembrane space (IMS) are transferred via the dinuclear copper A center (CU(A)) of subunit 2 and heme A of subunit 1 to the active site in subunit 1, a binuclear center (BNC) formed by heme A3 and copper B (CU(B)). The BNC reduces molecular oxygen to 2 water molecules using 4 electrons from cytochrome c in the IMS and 4 protons from the mitochondrial matrix. This chain is Cytochrome c oxidase subunit 6B2 (COX6B2), found in Bos taurus (Bovine).